Here is a 1890-residue protein sequence, read N- to C-terminus: Putative aminopeptidase-2 (1890 aa).

An N-terminal signal peptide occupies residues 1–20 (MRRKLLLLLCFIGLFSLIST). N-linked (GlcNAc...) asparagine glycosylation occurs at Asn-110. Substrate is bound by residues Glu-220 and 354-358 (GAMEN). His-390 is a binding site for Zn(2+). Glu-391 serves as the catalytic Proton acceptor. 2 residues coordinate Zn(2+): His-394 and Glu-413. Residues Asn-534, Asn-581, Asn-785, Asn-803, Asn-914, Asn-1024, and Asn-1094 are each glycosylated (N-linked (GlcNAc...) asparagine). Glu-1143 serves as a coordination point for substrate. The N-linked (GlcNAc...) asparagine glycan is linked to Asn-1245. 1280-1284 (GAMEN) is a substrate binding site. A Zn(2+)-binding site is contributed by His-1316. Glu-1317 serves as the catalytic Proton acceptor. Zn(2+) is bound by residues His-1320 and Glu-1339. 4 N-linked (GlcNAc...) asparagine glycosylation sites follow: Asn-1451, Asn-1521, Asn-1826, and Asn-1841.

It belongs to the peptidase M1 family. It depends on Zn(2+) as a cofactor.

Its function is as follows. Putative aminopeptidase which plays a role in oocyte maturation. This is Putative aminopeptidase-2 from Caenorhabditis elegans.